A 480-amino-acid chain; its full sequence is Ribosomal RNA small subunit methyltransferase F (480 aa).

S-adenosyl-L-methionine contacts are provided by residues 126–132 (AAAPGSK), Glu150, Asp177, and Asp195. Catalysis depends on Cys248, which acts as the Nucleophile.

The protein belongs to the class I-like SAM-binding methyltransferase superfamily. RsmB/NOP family.

Its subcellular location is the cytoplasm. It carries out the reaction cytidine(1407) in 16S rRNA + S-adenosyl-L-methionine = 5-methylcytidine(1407) in 16S rRNA + S-adenosyl-L-homocysteine + H(+). In terms of biological role, specifically methylates the cytosine at position 1407 (m5C1407) of 16S rRNA. This is Ribosomal RNA small subunit methyltransferase F from Cronobacter sakazakii (strain ATCC BAA-894) (Enterobacter sakazakii).